A 60-amino-acid chain; its full sequence is UPF0434 protein YcaR (60 aa).

This sequence belongs to the UPF0434 family.

This is UPF0434 protein YcaR from Escherichia coli O81 (strain ED1a).